A 108-amino-acid chain; its full sequence is Beta-defensin 126 (108 aa).

A signal peptide spans 1 to 20 (MKSLLFTLAVFMLLAQLVSG). Residues 21 to 63 (NWYVKKCLNDVGICKKKCKPGEMHIKNGWATCGKQRDCCVPAD) form an in vitro binds to LPS, mediates antimicrobial activity and inhibits LPS-mediated inflammation region. Disulfide bonds link C27/C58, C34/C52, and C38/C59.

The protein belongs to the beta-defensin family. Homodimer or homooligomer; disulfide-linked. In terms of processing, O-glycosylated; glycans contain alpha(2,3)-linked sialic acids.

The protein resides in the secreted. Highly glycosylated atypical beta-defensin involved in several aspects of sperm function. Facilitates sperm transport in the female reproductive tract and contributes to sperm protection against immunodetection; both functions are probably implicating the negative surface charge provided by its O-linked oligosaccharides in the sperm glycocalyx. Involved in binding of sperm to oviductal epithelial cells to form a sperm reservoir until ovulation. Release from the sperm surface during capacitation and ovaluation by an elevation of oviductal fluid pH is unmasking other surface components and allows sperm to penetrate the cumulus matrix and bind to the zona pellucida of the oocyte. In vitro has antimicrobial activity and may inhibit LPS-mediated inflammation. The sequence is that of Beta-defensin 126 (DEFB126) from Pan troglodytes (Chimpanzee).